Reading from the N-terminus, the 248-residue chain is Proteasome subunit alpha (248 aa).

It belongs to the peptidase T1A family. The 20S proteasome core is composed of 14 alpha and 14 beta subunits that assemble into four stacked heptameric rings, resulting in a barrel-shaped structure. The two inner rings, each composed of seven catalytic beta subunits, are sandwiched by two outer rings, each composed of seven alpha subunits. The catalytic chamber with the active sites is on the inside of the barrel. Has a gated structure, the ends of the cylinder being occluded by the N-termini of the alpha-subunits. Is capped at one or both ends by the proteasome regulatory ATPase, PAN.

Its subcellular location is the cytoplasm. With respect to regulation, the formation of the proteasomal ATPase PAN-20S proteasome complex, via the docking of the C-termini of PAN into the intersubunit pockets in the alpha-rings, triggers opening of the gate for substrate entry. Interconversion between the open-gate and close-gate conformations leads to a dynamic regulation of the 20S proteasome proteolysis activity. In terms of biological role, component of the proteasome core, a large protease complex with broad specificity involved in protein degradation. This Methanothermobacter thermautotrophicus (strain ATCC 29096 / DSM 1053 / JCM 10044 / NBRC 100330 / Delta H) (Methanobacterium thermoautotrophicum) protein is Proteasome subunit alpha.